The sequence spans 330 residues: Ketol-acid reductoisomerase (NADP(+)) (330 aa).

Residues 3 to 184 (LPVYYDKDID…GGGRMGVLKT (182 aa)) enclose the KARI N-terminal Rossmann domain. NADP(+)-binding positions include 26–29 (YGAQ), Ser52, and Ser54. Residue His109 is part of the active site. Residue Gly135 coordinates NADP(+). The KARI C-terminal knotted domain maps to 185-329 (SFKEECESDL…EILRAPFNHK (145 aa)). Mg(2+)-binding residues include Asp193, Glu197, Glu229, and Glu233. Ser254 contributes to the substrate binding site.

It belongs to the ketol-acid reductoisomerase family. Mg(2+) serves as cofactor.

The catalysed reaction is (2R)-2,3-dihydroxy-3-methylbutanoate + NADP(+) = (2S)-2-acetolactate + NADPH + H(+). It catalyses the reaction (2R,3R)-2,3-dihydroxy-3-methylpentanoate + NADP(+) = (S)-2-ethyl-2-hydroxy-3-oxobutanoate + NADPH + H(+). It participates in amino-acid biosynthesis; L-isoleucine biosynthesis; L-isoleucine from 2-oxobutanoate: step 2/4. Its pathway is amino-acid biosynthesis; L-valine biosynthesis; L-valine from pyruvate: step 2/4. Functionally, involved in the biosynthesis of branched-chain amino acids (BCAA). Catalyzes an alkyl-migration followed by a ketol-acid reduction of (S)-2-acetolactate (S2AL) to yield (R)-2,3-dihydroxy-isovalerate. In the isomerase reaction, S2AL is rearranged via a Mg-dependent methyl migration to produce 3-hydroxy-3-methyl-2-ketobutyrate (HMKB). In the reductase reaction, this 2-ketoacid undergoes a metal-dependent reduction by NADPH to yield (R)-2,3-dihydroxy-isovalerate. The sequence is that of Ketol-acid reductoisomerase (NADP(+)) from Helicobacter pylori (strain HPAG1).